Reading from the N-terminus, the 60-residue chain is UPF0509 protein Ent638_2183 (60 aa).

The protein belongs to the UPF0509 family.

In Enterobacter sp. (strain 638), this protein is UPF0509 protein Ent638_2183.